A 141-amino-acid polypeptide reads, in one-letter code: MAKKVIKEVKLQIPAGKANPAPPVGPALGQAGVNIMGFCKEFNARTADQAGLIIPVVITVFEDRSFTFITKTPPAAVLLKKAAKVEKGSGEPNKTKVASVTRAQVQEIAETKMPDLNAANVESAMLMVEGTARSMGITIQD.

This sequence belongs to the universal ribosomal protein uL11 family. As to quaternary structure, part of the ribosomal stalk of the 50S ribosomal subunit. Interacts with L10 and the large rRNA to form the base of the stalk. L10 forms an elongated spine to which L12 dimers bind in a sequential fashion forming a multimeric L10(L12)X complex. In terms of processing, one or more lysine residues are methylated.

Forms part of the ribosomal stalk which helps the ribosome interact with GTP-bound translation factors. In Listeria innocua serovar 6a (strain ATCC BAA-680 / CLIP 11262), this protein is Large ribosomal subunit protein uL11.